We begin with the raw amino-acid sequence, 622 residues long: 3-(3-hydroxy-phenyl)propionate/3-hydroxycinnamic acid hydroxylase (622 aa).

FAD-binding positions include 20–49 and 288–298; these read DVAI…VLEK and FRVDRVLLAGD.

The protein belongs to the PheA/TfdB FAD monooxygenase family. It depends on FAD as a cofactor.

The catalysed reaction is 3-(3-hydroxyphenyl)propanoate + NADH + O2 + H(+) = 3-(2,3-dihydroxyphenyl)propanoate + NAD(+) + H2O. It carries out the reaction (2E)-3-(3-hydroxyphenyl)prop-2-enoate + NADH + O2 + H(+) = (2E)-3-(2,3-dihydroxyphenyl)prop-2-enoate + NAD(+) + H2O. It participates in aromatic compound metabolism; 3-phenylpropanoate degradation. Functionally, catalyzes the insertion of one atom of molecular oxygen into position 2 of the phenyl ring of 3-(3-hydroxyphenyl)propionate (3-HPP) and hydroxycinnamic acid (3HCI). In Paraburkholderia xenovorans (strain LB400), this protein is 3-(3-hydroxy-phenyl)propionate/3-hydroxycinnamic acid hydroxylase.